Here is a 397-residue protein sequence, read N- to C-terminus: Acetate kinase (397 aa).

N7 provides a ligand contact to Mg(2+). An ATP-binding site is contributed by K14. Substrate is bound at residue R90. The active-site Proton donor/acceptor is the D147. Residues 207-211, 282-284, and 330-334 each bind ATP; these read HLGNG, DFR, and GLGEN. E383 is a binding site for Mg(2+).

Belongs to the acetokinase family. Homodimer. The cofactor is Mg(2+). Mn(2+) is required as a cofactor.

It localises to the cytoplasm. The catalysed reaction is acetate + ATP = acetyl phosphate + ADP. Its pathway is metabolic intermediate biosynthesis; acetyl-CoA biosynthesis; acetyl-CoA from acetate: step 1/2. Catalyzes the formation of acetyl phosphate from acetate and ATP. Can also catalyze the reverse reaction. The sequence is that of Acetate kinase from Clostridium botulinum (strain Kyoto / Type A2).